The chain runs to 84 residues: MNTATKLLRGGVRAYQLTLSSVLGGQCRFYPSCSAYAMEALAVHGALHGSALAARRILRCHPWNPGGVDPVPPAHHHDEMKQNG.

This sequence belongs to the UPF0161 family.

It is found in the cell inner membrane. Could be involved in insertion of integral membrane proteins into the membrane. This Acidiphilium cryptum (strain JF-5) protein is Putative membrane protein insertion efficiency factor.